The following is a 141-amino-acid chain: Auxin-responsive protein SAUR64 (141 aa).

The protein belongs to the ARG7 family.

It is found in the cell membrane. May promote auxin-stimulated organ elongation, such as hypocotyls, stamen filaments and petals. The chain is Auxin-responsive protein SAUR64 from Arabidopsis thaliana (Mouse-ear cress).